The sequence spans 324 residues: tRNA N6-adenosine threonylcarbamoyltransferase (324 aa).

Positions 107, 111, and 128 each coordinate Fe cation. Substrate contacts are provided by residues 128 to 132, Asp160, Gly173, Glu177, and Asn256; that span reads YVSGG. Asp284 is a binding site for Fe cation.

The protein belongs to the KAE1 / TsaD family. Monomer. Component of the KEOPS complex that consists of Kae1, Bud32, Cgi121 and Pcc1; the whole complex dimerizes. It depends on Fe(2+) as a cofactor.

The protein localises to the cytoplasm. It catalyses the reaction L-threonylcarbamoyladenylate + adenosine(37) in tRNA = N(6)-L-threonylcarbamoyladenosine(37) in tRNA + AMP + H(+). Required for the formation of a threonylcarbamoyl group on adenosine at position 37 (t(6)A37) in tRNAs that read codons beginning with adenine. Is a component of the KEOPS complex that is probably involved in the transfer of the threonylcarbamoyl moiety of threonylcarbamoyl-AMP (TC-AMP) to the N6 group of A37. Kae1 likely plays a direct catalytic role in this reaction, but requires other protein(s) of the complex to fulfill this activity. The protein is tRNA N6-adenosine threonylcarbamoyltransferase of Methanothrix thermoacetophila (strain DSM 6194 / JCM 14653 / NBRC 101360 / PT) (Methanosaeta thermophila).